The following is an 805-amino-acid chain: DNA gyrase subunit B (805 aa).

The region spanning 431–546 is the Toprim domain; it reads CEMYIVEGDS…NECVYIAQPP (116 aa). Positions 437, 511, and 513 each coordinate Mg(2+).

This sequence belongs to the type II topoisomerase GyrB family. As to quaternary structure, heterotetramer, composed of two GyrA and two GyrB chains. In the heterotetramer, GyrA contains the active site tyrosine that forms a transient covalent intermediate with DNA, while GyrB binds cofactors and catalyzes ATP hydrolysis. The cofactor is Mg(2+). Mn(2+) is required as a cofactor. Requires Ca(2+) as cofactor.

Its subcellular location is the cytoplasm. The catalysed reaction is ATP-dependent breakage, passage and rejoining of double-stranded DNA.. Its function is as follows. A type II topoisomerase that negatively supercoils closed circular double-stranded (ds) DNA in an ATP-dependent manner to modulate DNA topology and maintain chromosomes in an underwound state. Negative supercoiling favors strand separation, and DNA replication, transcription, recombination and repair, all of which involve strand separation. Also able to catalyze the interconversion of other topological isomers of dsDNA rings, including catenanes and knotted rings. Type II topoisomerases break and join 2 DNA strands simultaneously in an ATP-dependent manner. In Chlamydia pneumoniae (Chlamydophila pneumoniae), this protein is DNA gyrase subunit B.